A 256-amino-acid chain; its full sequence is Putative transcription factor 001R (256 aa).

Functionally, transcription activation. This is Putative transcription factor 001R from Frog virus 3 (isolate Goorha) (FV-3).